The following is a 2300-amino-acid chain: Protein Ycf2 (2300 aa).

Gly-1642–Ser-1649 is an ATP binding site.

It belongs to the Ycf2 family.

It is found in the plastid. The protein localises to the chloroplast stroma. Its function is as follows. Probable ATPase of unknown function. Its presence in a non-photosynthetic plant (Epifagus virginiana) and experiments in tobacco indicate that it has an essential function which is probably not related to photosynthesis. This chain is Protein Ycf2, found in Vitis vinifera (Grape).